Consider the following 78-residue polypeptide: Ferredoxin 7Fe (78 aa).

4Fe-4S ferredoxin-type domains are found at residues 2 to 29 and 31 to 60; these read AYVI…IHEG and DQYY…HEDF. The [3Fe-4S] cluster site is built by C9 and C17. [4Fe-4S] cluster contacts are provided by C21, C40, C43, and C46. Residue C50 participates in [3Fe-4S] cluster binding.

In terms of assembly, monomer. Requires [4Fe-4S] cluster as cofactor. It depends on [3Fe-4S] cluster as a cofactor.

This Hydrogenibacillus schlegelii (Bacillus schlegelii) protein is Ferredoxin 7Fe (fdxA).